Consider the following 292-residue polypeptide: Diaminopimelate epimerase (292 aa).

2 residues coordinate substrate: asparagine 14 and asparagine 78. The active-site Proton donor is cysteine 87. Substrate-binding positions include 88-89 (GN), asparagine 164, asparagine 197, and 221-222 (ER). The active-site Proton acceptor is cysteine 230. A substrate-binding site is contributed by 231-232 (GT).

This sequence belongs to the diaminopimelate epimerase family. Homodimer.

It is found in the cytoplasm. It carries out the reaction (2S,6S)-2,6-diaminopimelate = meso-2,6-diaminopimelate. Its pathway is amino-acid biosynthesis; L-lysine biosynthesis via DAP pathway; DL-2,6-diaminopimelate from LL-2,6-diaminopimelate: step 1/1. Its function is as follows. Catalyzes the stereoinversion of LL-2,6-diaminopimelate (L,L-DAP) to meso-diaminopimelate (meso-DAP), a precursor of L-lysine and an essential component of the bacterial peptidoglycan. The protein is Diaminopimelate epimerase of Leifsonia xyli subsp. xyli (strain CTCB07).